A 507-amino-acid polypeptide reads, in one-letter code: Serine/threonine-protein kinase BSK11 (507 aa).

A lipid anchor (N-myristoyl glycine) is attached at glycine 2. Over residues 16 to 26 (DKKITSDDLSG) the composition is skewed to basic and acidic residues. The interval 16–44 (DKKITSDDLSGRRGKGAKRGNRHRHANIN) is disordered. Residues 27 to 41 (RRGKGAKRGNRHRHA) are compositionally biased toward basic residues. Residues 75–332 (NAVVSVCSDQ…GDIISVITTL (258 aa)) form the Protein kinase domain. Residues 81-89 (CSDQEPNLV) and lysine 106 contribute to the ATP site. The Proton acceptor role is filled by aspartate 200.

The protein belongs to the protein kinase superfamily. Ser/Thr protein kinase family. As to quaternary structure, interacts with BRI1, ASK7/BIN2, BSK1, BSK6 and BSK8. In terms of processing, phosphorylated by BRI1, ASK7/BIN2 and ASK9/BIL2.

It is found in the cell membrane. The enzyme catalyses L-seryl-[protein] + ATP = O-phospho-L-seryl-[protein] + ADP + H(+). It carries out the reaction L-threonyl-[protein] + ATP = O-phospho-L-threonyl-[protein] + ADP + H(+). Its function is as follows. Probable serine/threonine kinase that acts as a positive regulator of brassinosteroid (BR) signaling downstream of the receptor kinase BRI1. The chain is Serine/threonine-protein kinase BSK11 from Arabidopsis thaliana (Mouse-ear cress).